A 205-amino-acid chain; its full sequence is Molybdopterin synthase catalytic subunit (205 aa).

Residues 1–36 are disordered; it reads MQHPTLQPEVDPNPVVSSSSSSSSSNPLPAHLNPAN. Substrate is bound by residues 146–147, Lys162, and 169–171; these read HR and KRE. Residues 179 to 205 are disordered; it reads GEGEGEWRANRDTDSQGNCRGDKVAEG. A compositionally biased stretch (basic and acidic residues) spans 183–205; it reads GEWRANRDTDSQGNCRGDKVAEG.

It belongs to the MoaE family. MOCS2B subfamily. As to quaternary structure, heterotetramer; composed of 2 small (MOCS2A) and 2 large (MOCS2B) subunits.

The protein localises to the cytoplasm. It carries out the reaction 2 [molybdopterin-synthase sulfur-carrier protein]-C-terminal-Gly-aminoethanethioate + cyclic pyranopterin phosphate + H2O = molybdopterin + 2 [molybdopterin-synthase sulfur-carrier protein]-C-terminal Gly-Gly + 2 H(+). Its pathway is cofactor biosynthesis; molybdopterin biosynthesis. Its function is as follows. Catalytic subunit of the molybdopterin synthase complex, a complex that catalyzes the conversion of precursor Z into molybdopterin. Acts by mediating the incorporation of 2 sulfur atoms from thiocarboxylated MOCS2A into precursor Z to generate a dithiolene group. The polypeptide is Molybdopterin synthase catalytic subunit (Ajellomyces capsulatus (strain NAm1 / WU24) (Darling's disease fungus)).